The following is a 121-amino-acid chain: Chromosome transmission fidelity protein 8 homolog (121 aa).

This sequence belongs to the CTF8 family. As to quaternary structure, component of the CTF18-RFC complex, which consists of CTF18, CTF8, DSCC1, RFC2, RFC3, RFC4 and RFC5. The CTF18-RFC complex does not interact with the Rad9/Rad1/Hus1 complex. The CTF18-RFC complex interacts with POLH. CTF18/CTF8/DSCC1 associate with PCNA. CTF8 exists as a dimer with DSCC1.

The protein resides in the nucleus. In terms of biological role, chromosome cohesion factor involved in sister chromatid cohesion and fidelity of chromosome transmission. Component of one of the cell nuclear antigen loader complexes, CTF18-replication factor C (CTF18-RFC), which consists of CTF18, CTF8, DSCC1, RFC2, RFC3, RFC4 and RFC5. The CTF18-RFC complex binds to single-stranded and primed DNAs and has weak ATPase activity that is stimulated the presence of primed DNA, replication protein A (RPA) and proliferating cell nuclear antigen (PCNA). The CTF18-RFC complex catalyzes the ATP-dependent loading of PCNA onto primed and gapped DNA. It also interacts with and stimulates POLH, which is suggestive of a protein network that coordinates DNA repair, recombination and chromosome cohesion reactions with replication fork progression. The sequence is that of Chromosome transmission fidelity protein 8 homolog from Rattus norvegicus (Rat).